A 57-amino-acid chain; its full sequence is UPF0434 protein swp_2279 (57 aa).

This sequence belongs to the UPF0434 family.

The protein is UPF0434 protein swp_2279 of Shewanella piezotolerans (strain WP3 / JCM 13877).